The chain runs to 1358 residues: Retrotransposon-like protein 1 (1358 aa).

Disordered stretches follow at residues 1-159 and 563-616; these read MIEP…TEHS and ADVF…TAPW. The segment covering 19–30 has biased composition (low complexity); that stretch reads SSKQMESSEGSS. The span at 65–79 shows a compositional bias: acidic residues; sequence EMEELPTDLLQDMEE. Over residues 131–149 the composition is skewed to basic and acidic residues; the sequence is AREEQEAHTDLKESGREET. The span at 583–592 shows a compositional bias: acidic residues; sequence GSDDLSESEP. 2 helical membrane-spanning segments follow: residues 1083-1099 and 1126-1146; these read LLYWKNTLALAAILVLL and LILDSSLIAGSSITTAITQLL. Disordered stretches follow at residues 1250 to 1283 and 1338 to 1358; these read DGLQDTSQDKQDNDVQEAPPSHTAATHPPRPRHL and QPREQARLEELPDEDEDANLD. Over residues 1267–1276 the composition is skewed to low complexity; it reads APPSHTAATH. Basic and acidic residues predominate over residues 1338 to 1347; sequence QPREQARLEE. The span at 1348-1358 shows a compositional bias: acidic residues; sequence LPDEDEDANLD.

Its subcellular location is the membrane. In terms of biological role, plays an essential role in capillaries endothelial cells for the maintenance of feto-maternal interface and for development of the placenta. The protein is Retrotransposon-like protein 1 (RTL1) of Homo sapiens (Human).